The following is a 203-amino-acid chain: Large ribosomal subunit protein bL25 (203 aa).

The protein belongs to the bacterial ribosomal protein bL25 family. CTC subfamily. Part of the 50S ribosomal subunit; part of the 5S rRNA/L5/L18/L25 subcomplex. Contacts the 5S rRNA. Binds to the 5S rRNA independently of L5 and L18.

Its function is as follows. This is one of the proteins that binds to the 5S RNA in the ribosome where it forms part of the central protuberance. The sequence is that of Large ribosomal subunit protein bL25 from Dechloromonas aromatica (strain RCB).